A 276-amino-acid chain; its full sequence is Acetyl-coenzyme A carboxylase carboxyl transferase subunit beta (276 aa).

The 253-residue stretch at 24-276 (LWRECSNCHE…NNLLNLHSDK (253 aa)) folds into the CoA carboxyltransferase N-terminal domain. Residues Cys28, Cys31, Cys46, and Cys49 each contribute to the Zn(2+) site. The C4-type zinc finger occupies 28–49 (CSNCHEKFYYRRAGVYEVCPNC).

Belongs to the AccD/PCCB family. Acetyl-CoA carboxylase is a heterohexamer composed of biotin carboxyl carrier protein (AccB), biotin carboxylase (AccC) and two subunits each of ACCase subunit alpha (AccA) and ACCase subunit beta (AccD). Zn(2+) serves as cofactor.

The protein localises to the cytoplasm. The enzyme catalyses N(6)-carboxybiotinyl-L-lysyl-[protein] + acetyl-CoA = N(6)-biotinyl-L-lysyl-[protein] + malonyl-CoA. It functions in the pathway lipid metabolism; malonyl-CoA biosynthesis; malonyl-CoA from acetyl-CoA: step 1/1. Component of the acetyl coenzyme A carboxylase (ACC) complex. Biotin carboxylase (BC) catalyzes the carboxylation of biotin on its carrier protein (BCCP) and then the CO(2) group is transferred by the transcarboxylase to acetyl-CoA to form malonyl-CoA. In Pediococcus pentosaceus (strain ATCC 25745 / CCUG 21536 / LMG 10740 / 183-1w), this protein is Acetyl-coenzyme A carboxylase carboxyl transferase subunit beta.